A 187-amino-acid polypeptide reads, in one-letter code: GTP cyclohydrolase 1 (187 aa).

Positions 76, 79, and 148 each coordinate Zn(2+).

This sequence belongs to the GTP cyclohydrolase I family. In terms of assembly, homomer.

It carries out the reaction GTP + H2O = 7,8-dihydroneopterin 3'-triphosphate + formate + H(+). Its pathway is cofactor biosynthesis; 7,8-dihydroneopterin triphosphate biosynthesis; 7,8-dihydroneopterin triphosphate from GTP: step 1/1. This chain is GTP cyclohydrolase 1, found in Desulforamulus reducens (strain ATCC BAA-1160 / DSM 100696 / MI-1) (Desulfotomaculum reducens).